Reading from the N-terminus, the 269-residue chain is Hydroxyethylthiazole kinase (269 aa).

Met-46 lines the substrate pocket. ATP contacts are provided by Arg-122 and Thr-168. Position 195 (Gly-195) interacts with substrate.

Belongs to the Thz kinase family. Mg(2+) serves as cofactor.

The catalysed reaction is 5-(2-hydroxyethyl)-4-methylthiazole + ATP = 4-methyl-5-(2-phosphooxyethyl)-thiazole + ADP + H(+). It participates in cofactor biosynthesis; thiamine diphosphate biosynthesis; 4-methyl-5-(2-phosphoethyl)-thiazole from 5-(2-hydroxyethyl)-4-methylthiazole: step 1/1. Catalyzes the phosphorylation of the hydroxyl group of 4-methyl-5-beta-hydroxyethylthiazole (THZ). This is Hydroxyethylthiazole kinase from Chloroflexus aurantiacus (strain ATCC 29366 / DSM 635 / J-10-fl).